A 201-amino-acid polypeptide reads, in one-letter code: Recombination protein RecR (201 aa).

The segment at 57–72 (CADCRTFTEQDVCNIC) adopts a C4-type zinc-finger fold. Residues 81 to 176 (GQICVVESPA…EASRIAHGVP (96 aa)) form the Toprim domain.

Belongs to the RecR family.

In terms of biological role, may play a role in DNA repair. It seems to be involved in an RecBC-independent recombinational process of DNA repair. It may act with RecF and RecO. This is Recombination protein RecR from Citrobacter koseri (strain ATCC BAA-895 / CDC 4225-83 / SGSC4696).